Reading from the N-terminus, the 314-residue chain is 2-dehydro-3-deoxygluconokinase (314 aa).

Substrate-binding positions include 28 to 32, Tyr-88, 102 to 104, and Arg-170; these read GDTLN and YWR. ATP contacts are provided by residues 168-170, 228-233, and 260-263; these read NYR, KCGKNG, and SAGD. Asp-263 contributes to the substrate binding site. Asp-263 (proton acceptor) is an active-site residue.

Belongs to the carbohydrate kinase PfkB family.

The catalysed reaction is 2-dehydro-3-deoxy-D-gluconate + ATP = 2-dehydro-3-deoxy-6-phospho-D-gluconate + ADP + H(+). It functions in the pathway carbohydrate acid metabolism; 2-dehydro-3-deoxy-D-gluconate degradation; D-glyceraldehyde 3-phosphate and pyruvate from 2-dehydro-3-deoxy-D-gluconate: step 1/2. Functionally, catalyzes the phosphorylation of 2-keto-3-deoxygluconate (KDG) to produce 2-keto-3-deoxy-6-phosphogluconate (KDPG). In Haemophilus influenzae (strain ATCC 51907 / DSM 11121 / KW20 / Rd), this protein is 2-dehydro-3-deoxygluconokinase (kdgK).